We begin with the raw amino-acid sequence, 512 residues long: Monocarboxylate transporter 10 (512 aa).

Residues 1–44 (MVPSQEEPAAERETNEAQPPGPAPSDDAPLPGPGPSDVSDVAAE) form a disordered region. Residues 1–63 (MVPSQEEPAA…AGSEPPVPPE (63 aa)) are Cytoplasmic-facing. A helical membrane pass occupies residues 64–84 (GGWGWLVMLAAMWCNGSVFGI). Over 85-111 (QNAYGVLFVSMLDTFKAKDDDNMAFKT) the chain is Extracellular. Residues 112–132 (AWVGSLSMGMIFFCCPIVSVF) traverse the membrane as a helical segment. The Cytoplasmic segment spans residues 133-141 (TDMFGCRRT). The helical transmembrane segment at 142–162 (AVVGAAVGFIGLMSSSFVSSI) threads the bilayer. Topologically, residues 163 to 168 (EPLYLT) are extracellular. A helical membrane pass occupies residues 169-189 (YGIIFACGCSFAYQPSLVILG). Over 190 to 201 (HYFKKRLGLVNG) the chain is Cytoplasmic. A helical membrane pass occupies residues 202 to 222 (IVTAGSSVFTILLPLLLGNLI). The Extracellular segment spans residues 223–232 (SSVKLFNTLR). Residues 233-253 (ILCIFMFVLFLAGFTYRPLVP) form a helical membrane-spanning segment. At 254 to 291 (STKEKESGGSRSSFFSRRKLSPPKKVFNFALFKETTYA) the chain is on the cytoplasmic side. S260 is subject to Phosphoserine. The helical transmembrane segment at 292–312 (VWAAGIPLALFGYFVPYVHLM) threads the bilayer. Over 313–326 (NHVKERFQDVNNKE) the chain is Extracellular. Residues 327–347 (VLFMCIGITSGVGRLLFGRIA) form a helical membrane-spanning segment. Residues 348–362 (DYLPGVKKVYLQVLS) are Cytoplasmic-facing. A helical transmembrane segment spans residues 363-383 (FFFIGLMSMMIPLCSAFGALI). A topological domain (extracellular) is located at residue A384. A helical transmembrane segment spans residues 385–405 (VCLAMGLFDGCFISIMAPIAF). The Cytoplasmic portion of the chain corresponds to 406-416 (ELVGPQDASQA). The chain crosses the membrane as a helical span at residues 417 to 437 (IGFLLGFMSIPMTVGPPIAGL). Topologically, residues 438-448 (LHDKLGTYDVA) are extracellular. Residues 449-469 (FYLAGIPPFVGGVVLCLIPWI) form a helical membrane-spanning segment. The Cytoplasmic segment spans residues 470–512 (HSKKQRKISKNAGGEKMEKMLENQSSLLSGSSGIFKKDSASII). S495, S498, S500, and S501 each carry phosphoserine.

It belongs to the major facilitator superfamily. Monocarboxylate porter (TC 2.A.1.13) family. Not N-glycosylated. As to expression, highly expressed in small intestine, particularly in jejunum and ileum, scarcely in colon and substantially in kidney, liver and skeletal muscle. In the brain expression is low and appears to be restricted to a subset of neurons, microglia cells, and oligodendrocytes.

The protein resides in the cell membrane. It is found in the basolateral cell membrane. The enzyme catalyses L-tryptophan(in) = L-tryptophan(out). It catalyses the reaction L-tyrosine(in) = L-tyrosine(out). The catalysed reaction is L-phenylalanine(in) = L-phenylalanine(out). It carries out the reaction 3,3',5-triiodo-L-thyronine(out) = 3,3',5-triiodo-L-thyronine(in). The enzyme catalyses L-thyroxine(out) = L-thyroxine(in). Sodium- and proton-independent thyroid hormones and aromatic acids transporter. Mediates both uptake and efflux of 3,5,3'-triiodothyronine (T3) and 3,5,3',5'-tetraiodothyronine (T4) with high affinity, suggesting a role in the homeostasis of thyroid hormone levels. Responsible for low affinity bidirectional transport of the aromatic amino acids, such as phenylalanine, tyrosine, tryptophan and L-3,4-dihydroxyphenylalanine (L-dopa). Plays an important role in homeostasis of aromatic amino acids. The protein is Monocarboxylate transporter 10 (Slc16a10) of Mus musculus (Mouse).